Reading from the N-terminus, the 351-residue chain is Large ribosomal subunit protein uL3 (351 aa).

2 disordered regions span residues 1–31 (MGHR…TPRT) and 246–271 (KGSR…GQLG).

Belongs to the universal ribosomal protein uL3 family. Part of the 50S ribosomal subunit. Forms a cluster with proteins L14 and L24e.

One of the primary rRNA binding proteins, it binds directly near the 3'-end of the 23S rRNA, where it nucleates assembly of the 50S subunit. In Saccharolobus islandicus (strain M.16.27) (Sulfolobus islandicus), this protein is Large ribosomal subunit protein uL3.